Here is a 158-residue protein sequence, read N- to C-terminus: MNRICHIEIDQTSPIPPTAEIEQERQVAIFDLLEENSFALPAREGRAPAEGPFRLTLAIREGRLVFDIRSEEEETVGEFHLSLGPFRQVVKDYFQICESYFEAVKRLPPSQIEAIDMARRGIHNEGARVLKERLEGKAEVDIDTARRLFTLICVLHWG.

This sequence belongs to the UPF0262 family.

The protein is UPF0262 protein RHOS4_22360 of Cereibacter sphaeroides (strain ATCC 17023 / DSM 158 / JCM 6121 / CCUG 31486 / LMG 2827 / NBRC 12203 / NCIMB 8253 / ATH 2.4.1.) (Rhodobacter sphaeroides).